We begin with the raw amino-acid sequence, 348 residues long: MRAAPFDFFFQSTALSTFFILCSLATNEIPTISGAPAGKIVQPPKPNILKQGCPSDLLHSRALRSIQLACRTHPATVISAFEGVQEGLQNCANRLRFQQWDCSEAGNIMHDPPLLRQGFRESSLIWALSSASAAWGVATACAQGWIDDCACNNQMGQNEYEFGGCTHGVQHGITASRKLLTKVGAVNTLLRKVEKHNLKAGRLAIKKTLISSCKCHGVSGSCQQKTCWKRTATLEHITDYLVEKYARAKLYTDDSVVKTTDLIYLEASPDVCKAKSVAGRVCAWRNETHTQGDCDRLCCGNGFSIRHEVVRVKCDCEFVWCCNLVCKDCIQHRWISTCNGTPPKSLIF.

Residues 1–25 (MRAAPFDFFFQSTALSTFFILCSLA) form the signal peptide. 11 cysteine pairs are disulfide-bonded: Cys91–Cys102, Cys141–Cys149, Cys151–Cys165, Cys213–Cys227, Cys215–Cys222, Cys272–Cys299, Cys282–Cys294, Cys298–Cys338, Cys314–Cys329, Cys316–Cys326, and Cys321–Cys322. The O-palmitoleoyl serine; by mom-1 moiety is linked to residue Ser219. Asn286 carries N-linked (GlcNAc...) asparagine glycosylation.

Belongs to the Wnt family. Post-translationally, palmitoleoylation is required for efficient binding to frizzled receptors. Depalmitoleoylation leads to Wnt signaling pathway inhibition. In terms of tissue distribution, expressed in the tail hypodermis.

It localises to the secreted. It is found in the extracellular space. The protein resides in the extracellular matrix. Ligand for members of the frizzled family of seven transmembrane receptors. Affects male tail development, vulval precursor cell specification and egg laying. Involved in morphogenesis by influencing polarity of asymmetric cell divisions of the B, U, and F cells in the male, and the T cell in males and hermaphrodites. Controls spindle orientation in B-gamma cell division during male copulatory spicule development. Involved in specification of the P7.p lineage during vulval development. Has a role in providing polarity and default lin-17 localization in axon development and positioning of neuromuscular synapses in DA9 regions by negatively regulating synaptogenesis. Plays a role in motorneuron development by promoting the extension of the anterior neurite of ventral D-type GABAergic motorneurons along the anterior-posterior axis of the ventral nerve cord. Positively regulates cilium position and dendrite morphogenesis in postembryonic PQR gas-sensing neurons. This is likely through regulating the localization of grdn-1 to the distal dendrites of PQR sensory neurons. This is Abnormal cell lineage protein 44 from Caenorhabditis elegans.